The sequence spans 439 residues: Secreted aspartic protease FUS4 (439 aa).

The first 22 residues, 1–22 (MLTIATLHVALQVFGAFSPSHA), serve as a signal peptide directing secretion. Residues 49 to 434 (YLFNVTVGSP…NFEDRSFGLA (386 aa)) form the Peptidase A1 domain. Asn52 and Asn61 each carry an N-linked (GlcNAc...) asparagine glycan. Asp67 is an active-site residue. N-linked (GlcNAc...) asparagine glycans are attached at residues Asn101, Asn107, and Asn123. Residue Asp296 is part of the active site. Cys352 and Cys390 are oxidised to a cystine.

Belongs to the peptidase A1 family.

The protein resides in the secreted. In terms of biological role, secreted aspartic protease; part of the gene cluster that mediates the biosynthesis of the mycotoxin fusarin C. Within the cluster, FUS1, FUS2, FUS8 and FUS9 are sufficient for fusarin production. The other FUS cluster members are not essential for fusarin C biosynthesis. The sequence is that of Secreted aspartic protease FUS4 from Gibberella moniliformis (strain M3125 / FGSC 7600) (Maize ear and stalk rot fungus).